Consider the following 546-residue polypeptide: Membrane protein insertase YidC (546 aa).

Residues 6-26 traverse the membrane as a helical segment; sequence NLLLIALLFVSFMIWQAWQVD. Residues 30 to 44 show a composition bias toward low complexity; sequence QPTAQTTQQTTNTAT. The tract at residues 30 to 55 is disordered; that stretch reads QPTAQTTQQTTNTATGDKASQAVPGS. 4 helical membrane passes run 344 to 364, 419 to 439, 457 to 477, and 498 to 518; these read KFIH…TFIV, LGGC…YYML, LSAQ…MYFI, and PVIF…YYIV.

This sequence belongs to the OXA1/ALB3/YidC family. Type 1 subfamily. Interacts with the Sec translocase complex via SecD. Specifically interacts with transmembrane segments of nascent integral membrane proteins during membrane integration.

Its subcellular location is the cell inner membrane. Functionally, required for the insertion and/or proper folding and/or complex formation of integral membrane proteins into the membrane. Involved in integration of membrane proteins that insert both dependently and independently of the Sec translocase complex, as well as at least some lipoproteins. Aids folding of multispanning membrane proteins. This Yersinia pestis protein is Membrane protein insertase YidC.